Consider the following 1683-residue polypeptide: Phospholipase D1 (1683 aa).

4 disordered regions span residues 1 to 150, 173 to 198, 259 to 289, and 384 to 416; these read MSNV…AYTQ, LKSS…QQVN, ILDI…SIPR, and VMEK…NITS. S2 bears the N-acetylserine mark. Phosphoserine is present on residues S8 and S30. 3 stretches are compositionally biased toward basic and acidic residues: residues 20-34, 63-82, and 90-112; these read SVTE…RPDE, NGKE…DRNL, and SLDH…ENMH. Positions 116–125 are enriched in low complexity; sequence NNLHSSNNNV. Positions 141–150 are enriched in polar residues; it reads RRSSSVAYTQ. Residue S145 is modified to Phosphoserine. Low complexity predominate over residues 263-279; it reads TNSNHNHRGNNNNNTGE. Residues 291-487 form the PX domain; that stretch reads SSIISISSNV…EFYELSPLGN (197 aa). The segment covering 392–404 has biased composition (polar residues); the sequence is KPSSAASAPHTSE. The span at 405–416 shows a compositional bias: low complexity; it reads NNNNDNGSNITS. The 169-residue stretch at 496–664 folds into the PH domain; that stretch reads QGKQGYLVIR…SSIIKMSTST (169 aa). PLD phosphodiesterase domains are found at residues 791–818 and 1091–1118; these read YFWA…CYGR and EQLY…NERS. Catalysis depends on residues H796, K798, D803, H1096, K1098, and D1103. The segment at 1430–1465 is disordered; that stretch reads KDMRRHLSSSTESTRNGSNSLPLNEKSNEGESTNVD. Residues 1437-1451 are compositionally biased toward polar residues; that stretch reads SSSTESTRNGSNSLP. At S1461 the chain carries Phosphoserine. Position 1462 is a phosphothreonine (T1462).

Belongs to the phospholipase D family. As to quaternary structure, interacts with SRF1.

It carries out the reaction a 1,2-diacyl-sn-glycero-3-phosphocholine + H2O = a 1,2-diacyl-sn-glycero-3-phosphate + choline + H(+). Its activity is regulated as follows. Activity is dependent of phosphatidylinositol 4,5-bisphosphate and the regulator SRF1. Inhibited by magnesium. Its function is as follows. Required for meiosis and spore formation. Seems to be involved in the coordinate induction of late meiotic events. PLD activity is induced under sporulation conditions and seems to be necessary to complete the meiotic cycle, but not for vegetative cell growth. This Saccharomyces cerevisiae (strain ATCC 204508 / S288c) (Baker's yeast) protein is Phospholipase D1 (SPO14).